Here is a 98-residue protein sequence, read N- to C-terminus: NADH-ubiquinone oxidoreductase chain 4L (98 aa).

The next 3 membrane-spanning stretches (helical) occupy residues 1–21 (MSITYMNMFMAFTISLLGLLL), 29–49 (SLLCLEGMMLSLFVMMTMIIL), and 61–81 (IILLVFAACEAALGLSLLVMV).

This sequence belongs to the complex I subunit 4L family. In terms of assembly, core subunit of respiratory chain NADH dehydrogenase (Complex I) which is composed of 45 different subunits.

It is found in the mitochondrion inner membrane. It catalyses the reaction a ubiquinone + NADH + 5 H(+)(in) = a ubiquinol + NAD(+) + 4 H(+)(out). Its function is as follows. Core subunit of the mitochondrial membrane respiratory chain NADH dehydrogenase (Complex I) which catalyzes electron transfer from NADH through the respiratory chain, using ubiquinone as an electron acceptor. Part of the enzyme membrane arm which is embedded in the lipid bilayer and involved in proton translocation. The protein is NADH-ubiquinone oxidoreductase chain 4L (MT-ND4L) of Platyrrhinus dorsalis (Thomas's broad-nosed bat).